The primary structure comprises 395 residues: Beta-1,4-galactosyltransferase 3 (395 aa).

The Cytoplasmic portion of the chain corresponds to 1-10; the sequence is MLRRLLERPC. Residues 11 to 31 traverse the membrane as a helical; Signal-anchor for type II membrane protein segment; that stretch reads TLALLVGSQLAVMMYLSLGGF. Over 32 to 395 the chain is Lumenal; it reads RSLSALFGRD…ANHTAPHGSH (364 aa). A glycan (N-linked (GlcNAc...) asparagine) is linked at N57. A disulfide bond links C79 and C121. UDP-alpha-D-galactose is bound by residues 132-136, 171-173, 198-199, Y228, and W260; these read PHRAR, FNR, and VD. C192 and C211 are oxidised to a cystine. D199 is a binding site for Mn(2+). Position 262–265 (262–265) interacts with N-acetyl-D-glucosamine; the sequence is GEDD. H293 is a Mn(2+) binding site. UDP-alpha-D-galactose is bound at residue 293–295; sequence HRG. R305 provides a ligand contact to N-acetyl-D-glucosamine. Residues N339 and N387 are each glycosylated (N-linked (GlcNAc...) asparagine). Residues 341-395 form a disordered region; it reads TADIGTDPRGPRAPSGPRYPPGSSQAFRQEMLQRRPPARPGPLPTANHTAPHGSH.

It belongs to the glycosyltransferase 7 family. The cofactor is Mn(2+).

The protein localises to the golgi apparatus. The protein resides in the golgi stack membrane. It catalyses the reaction an N-acetyl-beta-D-glucosaminyl derivative + UDP-alpha-D-galactose = a beta-D-galactosyl-(1-&gt;4)-N-acetyl-beta-D-glucosaminyl derivative + UDP + H(+). The enzyme catalyses N-acetyl-D-glucosamine + UDP-alpha-D-galactose = beta-D-galactosyl-(1-&gt;4)-N-acetyl-D-glucosamine + UDP + H(+). The catalysed reaction is a beta-D-GlcNAc-(1-&gt;3)-beta-D-Gal-(1-&gt;4)-beta-D-Glc-(1&lt;-&gt;1)-Cer(d18:1(4E)) + UDP-alpha-D-galactose = a neolactoside nLc4Cer(d18:1(4E)) + UDP + H(+). It carries out the reaction a beta-D-glucosylceramide + UDP-alpha-D-galactose = a beta-D-galactosyl-(1-&gt;4)-beta-D-glucosyl-(1&lt;-&gt;1)-ceramide + UDP + H(+). It catalyses the reaction a neolactoside IV(3)-beta-GlcNAc-nLc4Cer + UDP-alpha-D-galactose = a neolactoside nLc6Cer + UDP + H(+). The protein operates within protein modification; protein glycosylation. Functionally, responsible for the synthesis of complex-type N-linked oligosaccharides in many glycoproteins as well as the carbohydrate moieties of glycolipids. The protein is Beta-1,4-galactosyltransferase 3 (B4GALT3) of Cricetulus griseus (Chinese hamster).